Here is a 527-residue protein sequence, read N- to C-terminus: Peptide chain release factor 3 (527 aa).

The tr-type G domain maps to A9–L277. GTP is bound by residues S18 to T25, D86 to H90, and N140 to D143.

It belongs to the TRAFAC class translation factor GTPase superfamily. Classic translation factor GTPase family. PrfC subfamily.

The protein resides in the cytoplasm. Its function is as follows. Increases the formation of ribosomal termination complexes and stimulates activities of RF-1 and RF-2. It binds guanine nucleotides and has strong preference for UGA stop codons. It may interact directly with the ribosome. The stimulation of RF-1 and RF-2 is significantly reduced by GTP and GDP, but not by GMP. The sequence is that of Peptide chain release factor 3 from Pseudomonas fluorescens (strain Pf0-1).